A 1130-amino-acid polypeptide reads, in one-letter code: DNA-directed RNA polymerase I subunit rpa2 (1130 aa).

The C4-type zinc finger occupies 1070–1096 (CKLCGSTLTIYSKKDYSNQTVSECKSC).

It belongs to the RNA polymerase beta chain family. Component of the RNA polymerase I (Pol I) complex consisting of 14 subunits.

It is found in the nucleus. It localises to the nucleolus. The catalysed reaction is RNA(n) + a ribonucleoside 5'-triphosphate = RNA(n+1) + diphosphate. In terms of biological role, DNA-dependent RNA polymerase catalyzes the transcription of DNA into RNA using the four ribonucleoside triphosphates as substrates. Second largest core component of RNA polymerase I which synthesizes ribosomal RNA precursors. Proposed to contribute to the polymerase catalytic activity and forms the polymerase active center together with the largest subunit. Pol I is composed of mobile elements and RPA2 is part of the core element with the central large cleft and probably a clamp element that moves to open and close the cleft. The protein is DNA-directed RNA polymerase I subunit rpa2 (polr1b) of Dictyostelium discoideum (Social amoeba).